The sequence spans 435 residues: Monodehydroascorbate reductase 4, cytosolic (435 aa).

Residues 14–17 (GGVA), glutamate 41, arginine 48, lysine 53, isoleucine 96, and 147–148 (RD) each bind FAD. Residues 172–178 (GGYIGLE), glutamate 196, arginine 202, and glycine 261 contribute to the NAD(+) site. Residue 174 to 178 (YIGLE) coordinates NADP(+). Residues arginine 202 and glycine 261 each coordinate NADP(+). Residue aspartate 298 coordinates FAD. 314–315 (EH) provides a ligand contact to NAD(+). 314-315 (EH) is a binding site for NADP(+). Valine 316 provides a ligand contact to FAD. Arginine 320 contacts L-ascorbate. Tyrosine 349 contacts FAD. Tyrosine 349 is a binding site for NAD(+). Tyrosine 349 serves as a coordination point for NADP(+). Residue arginine 351 coordinates L-ascorbate.

Belongs to the FAD-dependent oxidoreductase family. It depends on FAD as a cofactor. Expressed in anthers.

Its subcellular location is the cytoplasm. It carries out the reaction 2 monodehydro-L-ascorbate radical + NADH + H(+) = 2 L-ascorbate + NAD(+). Functionally, catalyzes the conversion of monodehydroascorbate to ascorbate, oxidizing NADH in the process. Ascorbate is a major antioxidant against reactive oxygen species (ROS) and nitric oxide (NO). The protein is Monodehydroascorbate reductase 4, cytosolic of Oryza sativa subsp. japonica (Rice).